The primary structure comprises 285 residues: Nucleotide-binding protein FMG_1084 (285 aa).

8–15 (GMSGAGKS) contributes to the ATP binding site. 59–62 (DIRG) contributes to the GTP binding site.

The protein belongs to the RapZ-like family.

Displays ATPase and GTPase activities. The sequence is that of Nucleotide-binding protein FMG_1084 from Finegoldia magna (strain ATCC 29328 / DSM 20472 / WAL 2508) (Peptostreptococcus magnus).